The sequence spans 126 residues: MLLGNRPRPQMQRTASITRITIEVDGDQTAGQDSDVSMTVVDGGENYAQRFLSPVNHQRNERKYGGRSSPSSFLVNCGFCKRGLAPGRDIYMYKGDAAFCSIECREQQMEHDEGKTRNRVVLSPSK.

Residues 72–116 form an FLZ-type zinc finger; the sequence is SFLVNCGFCKRGLAPGRDIYMYKGDAAFCSIECREQQMEHDEGKT.

The protein belongs to the FLZ family. As to quaternary structure, interacts with KIN10 and KIN11 via its FLZ-type zinc finger domain. Interacts with KINB3 via its N-terminal part. Forms homodimer and heterodimer with FLZ1, FLZ2 and FLZ15 in vitro.

Its subcellular location is the cytoplasm. The protein localises to the nucleus. Functionally, may act as an adapter to facilitate the interaction of SnRK1 complex with effector proteins, conferring tissue- and stimulus-type specific differences in the SnRK1 regulation pathway. The chain is FCS-Like Zinc finger 7 from Arabidopsis thaliana (Mouse-ear cress).